The chain runs to 351 residues: GTP 3',8-cyclase (351 aa).

In terms of domain architecture, Radical SAM core spans 29–254 (RFGRVARDLR…EHGREDPSAP (226 aa)). Arg-38 contacts GTP. [4Fe-4S] cluster-binding residues include Cys-45 and Cys-49. An S-adenosyl-L-methionine-binding site is contributed by Tyr-51. Residue Cys-52 coordinates [4Fe-4S] cluster. Arg-89 is a GTP binding site. Gly-93 contributes to the S-adenosyl-L-methionine binding site. Thr-120 serves as a coordination point for GTP. Ser-144 is an S-adenosyl-L-methionine binding site. Lys-181 is a binding site for GTP. Position 214 (Met-214) interacts with S-adenosyl-L-methionine. Cys-278 and Cys-281 together coordinate [4Fe-4S] cluster. 283–285 (RTR) contacts GTP. Cys-295 provides a ligand contact to [4Fe-4S] cluster.

This sequence belongs to the radical SAM superfamily. MoaA family. In terms of assembly, monomer and homodimer. The cofactor is [4Fe-4S] cluster.

The catalysed reaction is GTP + AH2 + S-adenosyl-L-methionine = (8S)-3',8-cyclo-7,8-dihydroguanosine 5'-triphosphate + 5'-deoxyadenosine + L-methionine + A + H(+). Its pathway is cofactor biosynthesis; molybdopterin biosynthesis. In terms of biological role, catalyzes the cyclization of GTP to (8S)-3',8-cyclo-7,8-dihydroguanosine 5'-triphosphate. This chain is GTP 3',8-cyclase, found in Rhodococcus opacus (strain B4).